The primary structure comprises 346 residues: Probable long-chain-alcohol O-fatty-acyltransferase 6 (346 aa).

The next 8 membrane-spanning stretches (helical) occupy residues 7–27 (LFIQ…YLTP), 36–56 (LLSV…FSTV), 59–79 (SFTI…LFAL), 116–136 (FPKW…LQAY), 146–166 (FLLG…LTLI), 228–248 (FFAI…LYFY), 255–275 (TWEV…EVAL), and 289–309 (PAVS…WLFS).

This sequence belongs to the wax synthase family.

The protein resides in the membrane. The enzyme catalyses a long chain fatty alcohol + a fatty acyl-CoA = a wax ester + CoA. Catalyzes the final step in the synthesis of long-chain linear esters (waxes). This is Probable long-chain-alcohol O-fatty-acyltransferase 6 (AT6) from Arabidopsis thaliana (Mouse-ear cress).